The chain runs to 238 residues: Aspartate/glutamate leucyltransferase (238 aa).

It belongs to the R-transferase family. Bpt subfamily.

The protein localises to the cytoplasm. It catalyses the reaction N-terminal L-glutamyl-[protein] + L-leucyl-tRNA(Leu) = N-terminal L-leucyl-L-glutamyl-[protein] + tRNA(Leu) + H(+). The catalysed reaction is N-terminal L-aspartyl-[protein] + L-leucyl-tRNA(Leu) = N-terminal L-leucyl-L-aspartyl-[protein] + tRNA(Leu) + H(+). In terms of biological role, functions in the N-end rule pathway of protein degradation where it conjugates Leu from its aminoacyl-tRNA to the N-termini of proteins containing an N-terminal aspartate or glutamate. The chain is Aspartate/glutamate leucyltransferase from Shewanella sp. (strain MR-4).